We begin with the raw amino-acid sequence, 223 residues long: MSQTKTAKVRVTLFFILAGGVLAMVAVVTDHWAVLSPHLEHHNETCVAAHFGLWRICTTWVAMHNQDKNCDGTIPAGEKNCSYFRHFNPGESSEIFEFTTQKEYSISAAAIAIFSLGFIIIGSICAFLSFGNKRDYLLRPASMFYAFAGLCLIVSVEVMRQSVKRMIDSEDTVWIEYYYSWSFACACAGFTLLFLGGLFLLLFSLPRMPQNPWESCMDTESEH.

The Cytoplasmic segment spans residues 1–10 (MSQTKTAKVR). The helical transmembrane segment at 11-29 (VTLFFILAGGVLAMVAVVT) threads the bilayer. Residues 30–109 (DHWAVLSPHL…TQKEYSISAA (80 aa)) are Extracellular-facing. Residues Asn43 and Asn80 are each glycosylated (N-linked (GlcNAc...) asparagine). Residues Cys57 and Cys81 are joined by a disulfide bond. A helical transmembrane segment spans residues 110 to 130 (AIAIFSLGFIIIGSICAFLSF). The Cytoplasmic portion of the chain corresponds to 131–135 (GNKRD). A helical transmembrane segment spans residues 136-156 (YLLRPASMFYAFAGLCLIVSV). The Extracellular portion of the chain corresponds to 157–180 (EVMRQSVKRMIDSEDTVWIEYYYS). Residues 181-205 (WSFACACAGFTLLFLGGLFLLLFSL) traverse the membrane as a helical segment. Topologically, residues 206–223 (PRMPQNPWESCMDTESEH) are cytoplasmic.

The protein belongs to the PMP-22/EMP/MP20 family. CACNG subfamily. As to quaternary structure, component of a calcium channel complex consisting of a pore-forming alpha subunit (CACNA1S) and the ancillary subunits CACNB1 or CACNB2, CACNG1 and CACNA2D1. The channel complex contains alpha, beta, gamma and delta subunits in a 1:1:1:1 ratio, i.e. it contains either CACNB1 or CACNB2. In terms of processing, N-glycosylated. Skeletal muscle.

The protein localises to the cell membrane. Its subcellular location is the sarcolemma. In terms of biological role, regulatory subunit of the voltage-gated calcium channel that gives rise to L-type calcium currents in skeletal muscle. Regulates channel inactivation kinetics. This Rattus norvegicus (Rat) protein is Voltage-dependent calcium channel gamma-1 subunit (Cacng1).